The chain runs to 2210 residues: RNA-directed RNA polymerase L (2210 aa).

An endonuclease region spans residues 26–284; that stretch reads RDIFLSQHHP…SHKDSDVPSC (259 aa). The Mn(2+) site is built by glutamate 51, aspartate 89, and glutamate 102. Lysine 115 is an active-site residue. The RdRp catalytic domain occupies 1171–1368; that stretch reads CDMKMAVNNG…FLSSKLNKFI (198 aa). Position 1329 (aspartate 1329) interacts with Mg(2+).

Belongs to the Bunyavirales RNA polymerase family. As to quaternary structure, homomultimer; the oligomeric structure is essential for the polymerase activity. Interacts with nucleoprotein N. Interacts with protein Z; this interaction inhibits viral transcription and replication, Z partially blocks the product exit tunnel for the releasing nascent RNA product. Mn(2+) is required as a cofactor. It depends on Mg(2+) as a cofactor.

The protein resides in the virion. The protein localises to the host cytoplasm. It carries out the reaction RNA(n) + a ribonucleoside 5'-triphosphate = RNA(n+1) + diphosphate. RNA-dependent RNA polymerase, which is responsible for the replication and transcription of the viral RNA genome using antigenomic RNA as an intermediate. During transcription, synthesizes subgenomic RNAs and assures their capping by a cap-snatching mechanism, which involves the endonuclease activity cleaving the host capped pre-mRNAs. These short capped RNAs are then used as primers for viral transcription. The 3'-end of subgenomic mRNAs molecules are heterogeneous and not polyadenylated. The replicase function is to direct synthesis of antigenomic and genomic RNA which are encapsidated and non capped. As a consequence of the use of the same enzyme for both transcription and replication, these mechanisms need to be well coordinated. These processes may be regulated by proteins N and Z in a dose-dependent manner. Z protein inhibits the viral polymerase L und thus the viral transcription and RNA synthesis. The chain is RNA-directed RNA polymerase L from Junin mammarenavirus (JUNV).